We begin with the raw amino-acid sequence, 242 residues long: Probable transcriptional regulatory protein lhv_0777 (242 aa).

The tract at residues 1–22 is disordered; it reads MSGHSKWHNIQGRKNAQDAKRG.

Belongs to the TACO1 family.

It is found in the cytoplasm. In Lactobacillus helveticus (strain DPC 4571), this protein is Probable transcriptional regulatory protein lhv_0777.